We begin with the raw amino-acid sequence, 394 residues long: Succinate--CoA ligase [ADP-forming] subunit beta (394 aa).

The ATP-grasp domain maps to 9–243 (KDILAGFGIA…YSQLNPLEIA (235 aa)). Residues Lys45, 52–54 (GRG), Glu98, Val101, and Glu106 each bind ATP. The Mg(2+) site is built by Asn198 and Asp212. Substrate contacts are provided by residues Asn263 and 320-322 (GIM).

It belongs to the succinate/malate CoA ligase beta subunit family. As to quaternary structure, heterotetramer of two alpha and two beta subunits. The cofactor is Mg(2+).

It catalyses the reaction succinate + ATP + CoA = succinyl-CoA + ADP + phosphate. It carries out the reaction GTP + succinate + CoA = succinyl-CoA + GDP + phosphate. Its pathway is carbohydrate metabolism; tricarboxylic acid cycle; succinate from succinyl-CoA (ligase route): step 1/1. Succinyl-CoA synthetase functions in the citric acid cycle (TCA), coupling the hydrolysis of succinyl-CoA to the synthesis of either ATP or GTP and thus represents the only step of substrate-level phosphorylation in the TCA. The beta subunit provides nucleotide specificity of the enzyme and binds the substrate succinate, while the binding sites for coenzyme A and phosphate are found in the alpha subunit. This Pelobacter propionicus (strain DSM 2379 / NBRC 103807 / OttBd1) protein is Succinate--CoA ligase [ADP-forming] subunit beta.